A 715-amino-acid chain; its full sequence is Fatty acid oxidation complex subunit alpha (715 aa).

Residues 1-190 (MIYEGKAITV…KVGAVDAVVA (190 aa)) form an enoyl-CoA hydratase/isomerase region. Aspartate 297 is a substrate binding site. The interval 312–715 (RDVKQAAVLG…MAKNGQSFFG (404 aa)) is 3-hydroxyacyl-CoA dehydrogenase. NAD(+)-binding positions include methionine 325, aspartate 344, 401 to 403 (VVE), lysine 408, and serine 430. Histidine 451 (for 3-hydroxyacyl-CoA dehydrogenase activity) is an active-site residue. Residue asparagine 454 coordinates NAD(+). Substrate is bound by residues asparagine 501 and tyrosine 660.

It in the N-terminal section; belongs to the enoyl-CoA hydratase/isomerase family. This sequence in the C-terminal section; belongs to the 3-hydroxyacyl-CoA dehydrogenase family. As to quaternary structure, heterotetramer of two alpha chains (FadB) and two beta chains (FadA).

The enzyme catalyses a (3S)-3-hydroxyacyl-CoA + NAD(+) = a 3-oxoacyl-CoA + NADH + H(+). It carries out the reaction a (3S)-3-hydroxyacyl-CoA = a (2E)-enoyl-CoA + H2O. The catalysed reaction is a 4-saturated-(3S)-3-hydroxyacyl-CoA = a (3E)-enoyl-CoA + H2O. It catalyses the reaction (3S)-3-hydroxybutanoyl-CoA = (3R)-3-hydroxybutanoyl-CoA. The enzyme catalyses a (3Z)-enoyl-CoA = a 4-saturated (2E)-enoyl-CoA. It carries out the reaction a (3E)-enoyl-CoA = a 4-saturated (2E)-enoyl-CoA. It participates in lipid metabolism; fatty acid beta-oxidation. Functionally, involved in the aerobic and anaerobic degradation of long-chain fatty acids via beta-oxidation cycle. Catalyzes the formation of 3-oxoacyl-CoA from enoyl-CoA via L-3-hydroxyacyl-CoA. It can also use D-3-hydroxyacyl-CoA and cis-3-enoyl-CoA as substrate. The polypeptide is Fatty acid oxidation complex subunit alpha (Pseudomonas fluorescens (strain SBW25)).